A 264-amino-acid chain; its full sequence is 3-methyl-2-oxobutanoate hydroxymethyltransferase (264 aa).

Residues aspartate 45 and aspartate 84 each contribute to the Mg(2+) site. 3-methyl-2-oxobutanoate-binding positions include aspartate 45–serine 46, aspartate 84, and lysine 112. Residue glutamate 114 participates in Mg(2+) binding. Glutamate 181 functions as the Proton acceptor in the catalytic mechanism.

The protein belongs to the PanB family. Homodecamer; pentamer of dimers. The cofactor is Mg(2+).

Its subcellular location is the cytoplasm. The catalysed reaction is 3-methyl-2-oxobutanoate + (6R)-5,10-methylene-5,6,7,8-tetrahydrofolate + H2O = 2-dehydropantoate + (6S)-5,6,7,8-tetrahydrofolate. It functions in the pathway cofactor biosynthesis; (R)-pantothenate biosynthesis; (R)-pantoate from 3-methyl-2-oxobutanoate: step 1/2. Catalyzes the reversible reaction in which hydroxymethyl group from 5,10-methylenetetrahydrofolate is transferred onto alpha-ketoisovalerate to form ketopantoate. The sequence is that of 3-methyl-2-oxobutanoate hydroxymethyltransferase from Photobacterium profundum (strain SS9).